Reading from the N-terminus, the 213-residue chain is Orotate phosphoribosyltransferase (213 aa).

Lys26 is a binding site for 5-phospho-alpha-D-ribose 1-diphosphate. Phe34–Phe35 contributes to the orotate binding site. Residues Tyr72–Lys73, Arg99, Lys100, Lys103, His105, and Asp124–Ala132 each bind 5-phospho-alpha-D-ribose 1-diphosphate. Orotate contacts are provided by Thr128 and Arg156.

This sequence belongs to the purine/pyrimidine phosphoribosyltransferase family. PyrE subfamily. As to quaternary structure, homodimer. It depends on Mg(2+) as a cofactor.

It catalyses the reaction orotidine 5'-phosphate + diphosphate = orotate + 5-phospho-alpha-D-ribose 1-diphosphate. It functions in the pathway pyrimidine metabolism; UMP biosynthesis via de novo pathway; UMP from orotate: step 1/2. In terms of biological role, catalyzes the transfer of a ribosyl phosphate group from 5-phosphoribose 1-diphosphate to orotate, leading to the formation of orotidine monophosphate (OMP). This is Orotate phosphoribosyltransferase from Saccharophagus degradans (strain 2-40 / ATCC 43961 / DSM 17024).